A 167-amino-acid chain; its full sequence is Aphrodisin (167 aa).

An N-terminal signal peptide occupies residues 1-16 (MVKILLLALVFSLAHA). Q17 bears the Pyrrolidone carboxylic acid mark. Cystine bridges form between C54–C58 and C73–C165. N-linked (GlcNAc...) asparagine glycans are attached at residues N57 and N85.

The protein belongs to the calycin superfamily. Lipocalin family. In terms of tissue distribution, expressed in the vagina, uterus, and Bartholin's glands of female hamsters. Secreted in vaginal discharge.

The protein resides in the secreted. In terms of biological role, acts as an aphrodisiac pheromone, reliably eliciting copulatory behavior from male hamster. The protein is Aphrodisin of Cricetus cricetus (Black-bellied hamster).